Consider the following 255-residue polypeptide: Phosphoribosyl isomerase A (255 aa).

Asp-21 functions as the Proton acceptor in the catalytic mechanism. Residue Asp-140 is the Proton donor of the active site.

The protein belongs to the HisA/HisF family.

The protein resides in the cytoplasm. The enzyme catalyses 1-(5-phospho-beta-D-ribosyl)-5-[(5-phospho-beta-D-ribosylamino)methylideneamino]imidazole-4-carboxamide = 5-[(5-phospho-1-deoxy-D-ribulos-1-ylimino)methylamino]-1-(5-phospho-beta-D-ribosyl)imidazole-4-carboxamide. The catalysed reaction is N-(5-phospho-beta-D-ribosyl)anthranilate = 1-(2-carboxyphenylamino)-1-deoxy-D-ribulose 5-phosphate. It participates in amino-acid biosynthesis; L-histidine biosynthesis; L-histidine from 5-phospho-alpha-D-ribose 1-diphosphate: step 4/9. It functions in the pathway amino-acid biosynthesis; L-tryptophan biosynthesis; L-tryptophan from chorismate: step 3/5. In terms of biological role, involved in both the histidine and tryptophan biosynthetic pathways. This chain is Phosphoribosyl isomerase A, found in Mycolicibacterium vanbaalenii (strain DSM 7251 / JCM 13017 / BCRC 16820 / KCTC 9966 / NRRL B-24157 / PYR-1) (Mycobacterium vanbaalenii).